A 532-amino-acid polypeptide reads, in one-letter code: MVKRVAIVGAGVSGLASIKCCLEEGLEPTCFERSSDLGGLWRFTEHVEEGRASLYKSVVSNSSREMSCYPDFPFPEDYPNFVPNSLFLEYLKLYSTQFNLQRCIYFNTKVCSITKRPDFAVSGQWEVVTVTNGKQNSAIFDAVMVCTGFLTNPHLPLDSFPGILTFKGEYFHSRQYKHPDIFKDKRVLVVGMGNSGTDIAVEASHLAKKVFLSTTGGAWVISRVFDSGYPWDMIFMTRFQNMLRNLLPTPIVSWLISKKMNSWFNHVNYGVAPEDRTQLREPVLNDELPGRIITGKVFIKPSIKEVKENSVVFNNTPKEEPIDIIVFATGYTFAFPFLDESVVKVEDGQASLYKYIFPAHLPKPTLAVIGLIKPLGSMVPTGETQARWVVQVLKGATTLPPPSVMMEEVNERKKNKHSGFGLCYCKALQTDYITYIDDLLTSINAKPDLRAMLLTDPRLALSIFFGPCTPYHFRLTGPGKWEGARKAILTQWDRTVKVTKTRTIQESPSSFETLLKLFSFLALLIAVFLIFL.

Residues 1-510 (MVKRVAIVGA…TRTIQESPSS (510 aa)) lie on the Lumenal side of the membrane. FAD contacts are provided by residues 9–13 (GAGVS), Glu32, 40–41 (LW), and 61–62 (NS). NADP(+) contacts are provided by residues 60–61 (SN) and 195–198 (SGTD). The helical transmembrane segment at 511-531 (FETLLKLFSFLALLIAVFLIF) threads the bilayer. Residue Leu532 is a topological domain, cytoplasmic.

Belongs to the FMO family. FAD serves as cofactor. In terms of tissue distribution, liver.

Its subcellular location is the endoplasmic reticulum membrane. It carries out the reaction hypotaurine + NADPH + O2 + H(+) = taurine + NADP(+) + H2O. The enzyme catalyses hypotaurine + NADH + O2 + H(+) = taurine + NAD(+) + H2O. The catalysed reaction is trimethylamine + NADPH + O2 = trimethylamine N-oxide + NADP(+) + H2O. It catalyses the reaction N,N-dimethylaniline + NADPH + O2 + H(+) = N,N-dimethylaniline N-oxide + NADP(+) + H2O. Broad spectrum monooxygenase that catalyzes the oxygenation of a wide variety of nitrogen- and sulfur-containing compounds including xenobiotics. Catalyzes the S-oxygenation of hypotaurine to produce taurine, an organic osmolyte involved in cell volume regulation as well as a variety of cytoprotective and developmental processes. In vitro, catalyzes the N-oxygenation of trimethylamine (TMA) to produce trimethylamine N-oxide (TMAO) and could therefore participate to the detoxification of this compound that is generated by the action of gut microbiota from dietary precursors such as choline, choline containing compounds, betaine or L-carnitine. This is Flavin-containing monooxygenase 1 from Mus musculus (Mouse).